The chain runs to 262 residues: Adenosylcobinamide-GDP ribazoletransferase (262 aa).

A run of 5 helical transmembrane segments spans residues 41-63, 68-85, 115-134, 141-163, and 201-221; these read AFPF…LMAL, LFAA…TGAL, IGTY…VSAF, FSPL…AMVW, and LLFY…VAFL.

This sequence belongs to the CobS family. As to quaternary structure, associated with a large complex of proteins. Mg(2+) is required as a cofactor.

The protein resides in the cell inner membrane. The catalysed reaction is alpha-ribazole + adenosylcob(III)inamide-GDP = adenosylcob(III)alamin + GMP + H(+). It catalyses the reaction alpha-ribazole 5'-phosphate + adenosylcob(III)inamide-GDP = adenosylcob(III)alamin 5'-phosphate + GMP + H(+). It functions in the pathway cofactor biosynthesis; adenosylcobalamin biosynthesis; adenosylcobalamin from cob(II)yrinate a,c-diamide: step 7/7. Joins adenosylcobinamide-GDP and alpha-ribazole to generate adenosylcobalamin (Ado-cobalamin). Also synthesizes adenosylcobalamin 5'-phosphate from adenosylcobinamide-GDP and alpha-ribazole 5'-phosphate. In Sinorhizobium sp, this protein is Adenosylcobinamide-GDP ribazoletransferase (cobV).